The chain runs to 558 residues: Putative ABC transporter ATP-binding protein SAG1633 (558 aa).

2 consecutive ABC transporter domains span residues 5-246 and 295-527; these read IEWK…GIRE and LSVQ…THLK. Residues 39 to 46 and 328 to 335 contribute to the ATP site; these read GPSGSGKS and GKNGAGKS.

The protein belongs to the ABC transporter superfamily.

It is found in the cell membrane. Its function is as follows. Probably part of an ABC transporter complex. Responsible for energy coupling to the transport system. This chain is Putative ABC transporter ATP-binding protein SAG1633, found in Streptococcus agalactiae serotype V (strain ATCC BAA-611 / 2603 V/R).